An 882-amino-acid chain; its full sequence is E3 ubiquitin-protein ligase SH3RF3 (882 aa).

The interval 18 to 42 (AQSEGDEDRPGERRRRRAAATAAGA) is disordered. The segment at 57 to 98 (CSVCLERLDTTAKVLPCQHTFCRRCLESIVCSRHELRCPECR) adopts an RING-type zinc-finger fold. Residues 124–159 (RPRAGTSPGGSPPARPIPGQSAAPTLAGGGGGAAGS) are disordered. SH3 domains follow at residues 194–253 (CLLP…CIQP) and 256–319 (HAPP…LNDS). Residues 368 to 399 (RRVDGKKNTKKRHSFTALSVTHRSSQAASHRH) are disordered. Residues 369-439 (RVDGKKNTKK…APTQDVSSSA (71 aa)) are interaction with RAC1. Ser-400 carries the phosphoserine modification. A compositionally biased stretch (polar residues) spans 433-444 (QDVSSSAGSTPT). A disordered region spans residues 433–458 (QDVSSSAGSTPTAVPRAASVSGEQGT). One can recognise an SH3 3 domain in the interval 464-525 (LPLNVYLALY…PGNYVTPVSR (62 aa)). 3 stretches are compositionally biased toward polar residues: residues 575-588 (PQAHAQHPTASPPT), 596-635 (AQPTASQARSTISTAAHSAAQAQDRPTATVSPLRTQNSPS), and 697-706 (LSTSSPTNTG). Disordered stretches follow at residues 575 to 664 (PQAH…CPRP) and 693 to 747 (PIGV…PTHD). Basic and acidic residues predominate over residues 708–721 (KLDEKKSEKKEKKS). Ser-797 bears the Phosphoserine mark. The region spanning 823–882 (LPRERYRVVVSYPPQSEAEIELKEGDIVFVHKKREDGWYKGTLQRNGRTGLFPGSFVESF) is the SH3 4 domain.

The protein belongs to the SH3RF family. Interacts (via SH3 domain 3) with PAK2. Interacts with RAC1 (GTP-bound form). In terms of processing, autoubiquitinated.

It catalyses the reaction S-ubiquitinyl-[E2 ubiquitin-conjugating enzyme]-L-cysteine + [acceptor protein]-L-lysine = [E2 ubiquitin-conjugating enzyme]-L-cysteine + N(6)-ubiquitinyl-[acceptor protein]-L-lysine.. The protein operates within protein modification; protein ubiquitination. Functionally, has E3 ubiquitin-protein ligase activity. This Homo sapiens (Human) protein is E3 ubiquitin-protein ligase SH3RF3 (SH3RF3).